Consider the following 90-residue polypeptide: Probable Fe(2+)-trafficking protein (90 aa).

Belongs to the Fe(2+)-trafficking protein family.

Functionally, could be a mediator in iron transactions between iron acquisition and iron-requiring processes, such as synthesis and/or repair of Fe-S clusters in biosynthetic enzymes. This Acinetobacter baylyi (strain ATCC 33305 / BD413 / ADP1) protein is Probable Fe(2+)-trafficking protein.